Here is a 434-residue protein sequence, read N- to C-terminus: Glutamyl-tRNA reductase (434 aa).

Substrate contacts are provided by residues 49-52 (TCNR), Ser109, 114-116 (EPQ), and Gln120. The active-site Nucleophile is Cys50. Position 189–194 (189–194 (GAGEMC)) interacts with NADP(+).

The protein belongs to the glutamyl-tRNA reductase family. In terms of assembly, homodimer.

It carries out the reaction (S)-4-amino-5-oxopentanoate + tRNA(Glu) + NADP(+) = L-glutamyl-tRNA(Glu) + NADPH + H(+). The protein operates within porphyrin-containing compound metabolism; protoporphyrin-IX biosynthesis; 5-aminolevulinate from L-glutamyl-tRNA(Glu): step 1/2. Catalyzes the NADPH-dependent reduction of glutamyl-tRNA(Glu) to glutamate 1-semialdehyde (GSA). The polypeptide is Glutamyl-tRNA reductase (Geotalea daltonii (strain DSM 22248 / JCM 15807 / FRC-32) (Geobacter daltonii)).